The chain runs to 344 residues: Follistatin (344 aa).

The N-terminal stretch at 1 to 29 (MVRARHQPGGLCLLLLLLCQFMEDRSAQA) is a signal peptide. The 74-residue stretch at 30–103 (GNCWLRQAKN…TCENVDCGPG (74 aa)) folds into the TB domain. Cystine bridges form between cysteine 32–cysteine 55, cysteine 42–cysteine 88, cysteine 56–cysteine 91, cysteine 95–cysteine 106, cysteine 100–cysteine 116, cysteine 118–cysteine 150, cysteine 122–cysteine 143, cysteine 132–cysteine 164, cysteine 168–cysteine 179, cysteine 173–cysteine 189, cysteine 192–cysteine 225, cysteine 196–cysteine 218, cysteine 207–cysteine 239, cysteine 245–cysteine 256, cysteine 250–cysteine 267, cysteine 270–cysteine 302, cysteine 274–cysteine 295, and cysteine 284–cysteine 316. A Follistatin-like 1 domain is found at 94–117 (TCENVDCGPGKKCRMNKKNKPRCV). One can recognise a Kazal-like 1 domain in the interval 112 to 166 (NKPRCVCAPDCSNITWKGPVCGLDGKTYRNECALLKARCKEQPELEVQYQGRCKK). A glycan (N-linked (GlcNAc...) asparagine) is linked at asparagine 124. Residues 167–190 (TCRDVFCPGSSTCVVDQTNNAYCV) form the Follistatin-like 2 domain. The region spanning 186-241 (NAYCVTCNRICPEPASSEQYLCGNDGVTYSSACHLRKATCLLGRSIGLAYEGKCIK) is the Kazal-like 2 domain. Positions 244 to 268 (SCEDIQCTGGKKCLWDFKVGRGRCS) constitute a Follistatin-like 3 domain. The Kazal-like 3 domain occupies 264-318 (RGRCSLCDELCPDSKSDEPVCASDNATYASECAMKEAACSSGVLLEVKHSGSCNS). The N-linked (GlcNAc...) asparagine glycan is linked to asparagine 288. Residues 314–344 (GSCNSISEDTEEEEEDEDQDYSFPISSILEW) are disordered. Acidic residues predominate over residues 321–333 (EDTEEEEEDEDQD).

Interacts with GDF11. Interacts with activin A/INHBA. Interacts with MYOSTATIN/MSTN. As to expression, isoform 1 is the predominant isoform in serum but is undetectable in follicular fluid. In the embryo, strong expression is seen in the palatal epithelia, including the medial edge epithelial and midline epithelial seam of the palatal shelves. Less pronounced expression is also seen throughout the palatal shelf and tongue mesenchyme.

The protein localises to the secreted. The protein resides in the nucleus. It is found in the nucleolus. Functionally, multifunctional regulatory protein whose primary function is to antagonize members of the transforming growth factor beta (TGF-beta) superfamily including activin, myostatin, GDF11 or bone morphogenetic proteins (BMPs). Mechanistically, binds to these ligands in the extracellular space, blocking their type II receptor-binding site to inhibit downstream signaling. Plays an essential role in muscle fiber formation and growth both by preventing the repressive effects of myostatin and through SMAD3/AKT/mTOR signaling independently of myostatin. Also promotes neural differentiation by antagonizing the action BMP4. Acts as a specific inhibitor of the biosynthesis and secretion of pituitary follicle stimulating hormone (FSH) by sequestering activin A/INHBA. On the other hand, translocates into the nucleus where it down-regulates rRNA synthesis and ribosome biogenesis to maintain cellular energy homeostasis by binding to rDNA. The chain is Follistatin from Homo sapiens (Human).